A 203-amino-acid polypeptide reads, in one-letter code: uncharacterized protein (203 aa).

The protein belongs to the DadA oxidoreductase family.

In terms of biological role, either a functional dehydrogenase or a non-functional fragment. This is an uncharacterized protein from Sinorhizobium fredii (strain NBRC 101917 / NGR234).